Consider the following 142-residue polypeptide: Small ribosomal subunit protein bS18c (142 aa).

The tract at residues 1–21 (MDRITGPFRKSKKSFRKPLPP) is disordered.

Belongs to the bacterial ribosomal protein bS18 family. As to quaternary structure, part of the 30S ribosomal subunit.

The protein resides in the plastid. In Cuscuta gronovii (Common dodder), this protein is Small ribosomal subunit protein bS18c.